Consider the following 161-residue polypeptide: Endoribonuclease YbeY (161 aa).

Zn(2+) contacts are provided by histidine 121, histidine 125, and histidine 131.

This sequence belongs to the endoribonuclease YbeY family. Requires Zn(2+) as cofactor.

Its subcellular location is the cytoplasm. Functionally, single strand-specific metallo-endoribonuclease involved in late-stage 70S ribosome quality control and in maturation of the 3' terminus of the 16S rRNA. This Stenotrophomonas maltophilia (strain R551-3) protein is Endoribonuclease YbeY.